Here is a 465-residue protein sequence, read N- to C-terminus: ATP-dependent rRNA helicase rrp3 (465 aa).

The segment covering 1 to 22 (MAPSEKKLTEDKKNSSLNKKIE) has biased composition (basic and acidic residues). A disordered region spans residues 1-44 (MAPSEKKLTEDKKNSSLNKKIETSNSSSEKSSENNNGDSQNNEA). Low complexity predominate over residues 23–36 (TSNSSSEKSSENNN). The Q motif motif lies at 46–74 (KTFKELGVIDELCEACEKLGFKTPTPIQQ). The region spanning 77-248 (IPVVLNKRDV…RASLHQPVRV (172 aa)) is the Helicase ATP-binding domain. Position 90 to 97 (90 to 97 (AQTGSGKT)) interacts with ATP. A DEAD box motif is present at residues 196–199 (DEAD). One can recognise a Helicase C-terminal domain in the interval 275–419 (YLVYLVNELA…EYEIDKEGVF (145 aa)). The segment covering 442–453 (RRKSKGKLHTKR) has biased composition (basic residues). Residues 442–465 (RRKSKGKLHTKRKRDDLDREEQIY) form a disordered region. Over residues 454-465 (KRDDLDREEQIY) the composition is skewed to basic and acidic residues.

The protein belongs to the DEAD box helicase family. DDX47/RRP3 subfamily. Interacts with the SSU processome.

Its subcellular location is the nucleus. It catalyses the reaction ATP + H2O = ADP + phosphate + H(+). Functionally, ATP-dependent rRNA helicase required for pre-ribosomal RNA processing. Involved in the maturation of the 35S-pre-rRNA and to its cleavage to mature 18S rRNA. The polypeptide is ATP-dependent rRNA helicase rrp3 (Schizosaccharomyces pombe (strain 972 / ATCC 24843) (Fission yeast)).